Here is a 381-residue protein sequence, read N- to C-terminus: MDQSPFPDIAHQTASFSDGLVLDCGTTLQRLEVAYRTYGSLNAEKSNAILICHALTGDQYVAEPHPLTGKPGWWNALVGAGKPVDTDRFFVICANVLGGCMGSTGPRSRRDHGADEPWSIDFPAITVQDMVRAQKKLVDWLGIERLFAVVGGSMGGMQVLAWASLFPDRVFAAVPIATAPYHSAQNIAFHEVGRQAIYTDPDFHGGHYRTHGVIPARGLAVARMTAHITYLSEAALTRKFGRRLQRQNALAAPVFGERFAVESYLEHQGSSFVRRFDANSYLVITRAMDYFDLAADHGGSLSAAFRGTKTRFLLVSFSSDWLFPTAESRAMARALNQVAANVSFVEIVSDKGHDAFLLDEPDFHRTVAGFISGAAEAAGLQ.

One can recognise an AB hydrolase-1 domain in the interval 47-359 (NAILICHALT…DKGHDAFLLD (313 aa)). S153 serves as the catalytic Nucleophile. R223 serves as a coordination point for substrate. Catalysis depends on residues D320 and H353. Residue D354 coordinates substrate.

It belongs to the AB hydrolase superfamily. MetX family. In terms of assembly, homodimer.

Its subcellular location is the cytoplasm. It carries out the reaction L-homoserine + acetyl-CoA = O-acetyl-L-homoserine + CoA. The protein operates within amino-acid biosynthesis; L-methionine biosynthesis via de novo pathway; O-acetyl-L-homoserine from L-homoserine: step 1/1. Functionally, transfers an acetyl group from acetyl-CoA to L-homoserine, forming acetyl-L-homoserine. The polypeptide is Homoserine O-acetyltransferase (Acidiphilium cryptum (strain JF-5)).